The following is a 305-amino-acid chain: Acetylglutamate kinase (305 aa).

Substrate-binding positions include 75-76 (GG), Arg-97, and Asn-202.

Belongs to the acetylglutamate kinase family. ArgB subfamily.

Its subcellular location is the cytoplasm. It catalyses the reaction N-acetyl-L-glutamate + ATP = N-acetyl-L-glutamyl 5-phosphate + ADP. The protein operates within amino-acid biosynthesis; L-arginine biosynthesis; N(2)-acetyl-L-ornithine from L-glutamate: step 2/4. In terms of biological role, catalyzes the ATP-dependent phosphorylation of N-acetyl-L-glutamate. This chain is Acetylglutamate kinase, found in Rhodospirillum centenum (strain ATCC 51521 / SW).